We begin with the raw amino-acid sequence, 907 residues long: Probable dipeptidyl-aminopeptidase B (907 aa).

Over residues 1-11 the composition is skewed to basic and acidic residues; the sequence is MYDQVPYRDTD. Positions 1 to 71 are disordered; that stretch reads MYDQVPYRDT…RGKPDEDDDL (71 aa). Topologically, residues 1-88 are cytoplasmic; sequence MYDQVPYRDT…LKPMERKVRR (88 aa). The span at 22–36 shows a compositional bias: low complexity; sequence SDSNRSSIDTTSTTS. A helical; Signal-anchor for type II membrane protein transmembrane segment spans residues 89-109; it reads AMYLLAFLMIGGWFLALAVYV. Residues 110–907 are Vacuolar-facing; sequence SREHFGTPDT…PLRKRNRELV (798 aa). 2 N-linked (GlcNAc...) asparagine glycosylation sites follow: Asn185 and Asn341. The active-site Charge relay system is the Ser746. A glycan (N-linked (GlcNAc...) asparagine) is linked at Asn800. Active-site charge relay system residues include Asp823 and His856.

It belongs to the peptidase S9B family.

Its subcellular location is the vacuole membrane. The catalysed reaction is Release of an N-terminal dipeptide, Xaa-Yaa-|-Zaa-, from a polypeptide, preferentially when Yaa is Pro, provided Zaa is neither Pro nor hydroxyproline.. In terms of biological role, type IV dipeptidyl-peptidase which removes N-terminal dipeptides sequentially from polypeptides having unsubstituted N-termini provided that the penultimate residue is proline. This Tuber melanosporum (strain Mel28) (Perigord black truffle) protein is Probable dipeptidyl-aminopeptidase B (DAPB).